The chain runs to 31 residues: Kallikrein-1 (31 aa).

One can recognise a Peptidase S1 domain in the interval 1–31 (VIGGQECARDSHPWQAAVYHFSDIECGGVLV).

It belongs to the peptidase S1 family. Kallikrein subfamily.

It carries out the reaction Preferential cleavage of Arg-|-Xaa bonds in small molecule substrates. Highly selective action to release kallidin (lysyl-bradykinin) from kininogen involves hydrolysis of Met-|-Xaa or Leu-|-Xaa.. Functionally, glandular kallikreins cleave Met-Lys and Arg-Ser bonds in kininogen to release Lys-bradykinin. This is Kallikrein-1 from Cavia porcellus (Guinea pig).